A 122-amino-acid polypeptide reads, in one-letter code: Ribosome-binding factor A (122 aa).

The protein belongs to the RbfA family. In terms of assembly, monomer. Binds 30S ribosomal subunits, but not 50S ribosomal subunits or 70S ribosomes.

It localises to the cytoplasm. In terms of biological role, one of several proteins that assist in the late maturation steps of the functional core of the 30S ribosomal subunit. Associates with free 30S ribosomal subunits (but not with 30S subunits that are part of 70S ribosomes or polysomes). Required for efficient processing of 16S rRNA. May interact with the 5'-terminal helix region of 16S rRNA. The sequence is that of Ribosome-binding factor A from Albidiferax ferrireducens (strain ATCC BAA-621 / DSM 15236 / T118) (Rhodoferax ferrireducens).